The following is a 1069-amino-acid chain: Protocadherin-8 (1069 aa).

An N-terminal signal peptide occupies residues 1–29 (MSPVKRWGSPCLFPLQLFSLCWVLSVAQS). Cadherin domains follow at residues 30-135 (KTVR…APRF), 136-245 (PRAQ…SPAF), 247-354 (QGAV…APDI), 393-497 (QETG…APLF), 498-609 (TKPV…SPVL), and 615-721 (ANGS…VPAS). The Extracellular segment spans residues 30–747 (KTVRYSTFEE…SGPSLQWDTP (718 aa)). Asn-616 carries an N-linked (GlcNAc...) asparagine glycan. Residues 719–738 (PASAGSPEHFRPPGSRLAPS) are disordered. Residues 748-768 (LIVIIVLAGSCTLLLAAIIAI) form a helical membrane-spanning segment. The Cytoplasmic segment spans residues 769–1069 (ATTCNRRKKE…SPKKGTNENV (301 aa)). Disordered stretches follow at residues 777–859 (KEVR…TGES), 905–927 (REAE…DSDS), and 1031–1069 (LSPP…NENV). Composition is skewed to basic and acidic residues over residues 780–790 (RKGGALREERP) and 905–920 (REAE…KGDS). Position 1052 is a phosphoserine (Ser-1052).

As to quaternary structure, the N-terminal extracellular domain forms homophilic interactions; these interactions activate p38 MAPK via TAOK2 and trigger endocytosis. Interacts with CDH2; this interaction may lead to CDH2 cointernalization. Interacts with CDH11. Interacts with TAOK2. In terms of tissue distribution, enriched in brain relative to peripheral tissues, with low expression in the testis. Expressed in hippocampal neurons (at protein level).

The protein localises to the cell membrane. The protein resides in the cell projection. It is found in the dendrite. Its subcellular location is the presynaptic cell membrane. It localises to the postsynaptic cell membrane. In terms of biological role, calcium-dependent cell-adhesion protein. May play a role in activity-induced synaptic reorganization underlying long term memory. Could be involved in CDH2 internalization through TAOK2/p38 MAPK pathway. In hippocampal neurons, may play a role in the down-regulation of dendritic spines, maybe through its action on CDH2 endocytosis. The chain is Protocadherin-8 (Pcdh8) from Rattus norvegicus (Rat).